Reading from the N-terminus, the 413-residue chain is Elongation factor 1-alpha (413 aa).

GTP-binding positions include 1 to 7 (HVDSGKS), 77 to 81 (DAPGH), and 139 to 142 (NKMD). The region spanning 1-228 (HVDSGKSTTT…DAILPPARPT (228 aa)) is the tr-type G domain. A 5-glutamyl glycerylphosphorylethanolamine mark is found at Glu-287 and Glu-360.

Belongs to the TRAFAC class translation factor GTPase superfamily. Classic translation factor GTPase family. EF-Tu/EF-1A subfamily.

The protein localises to the cytoplasm. Its function is as follows. This protein promotes the GTP-dependent binding of aminoacyl-tRNA to the A-site of ribosomes during protein biosynthesis. This is Elongation factor 1-alpha from Heliocheilus albipunctella (Millet head miner).